The following is a 266-amino-acid chain: Nickel import ATP-binding protein NikE (266 aa).

Residues 4–252 enclose the ABC transporter domain; that stretch reads ISADNIVKIY…RHPASRLLRE (249 aa). 45 to 52 is an ATP binding site; sequence GRSGCGKS.

It belongs to the ABC transporter superfamily. Nickel importer (TC 3.A.1.5.3) family. In terms of assembly, the complex is composed of two ATP-binding proteins (NikD and NikE), two transmembrane proteins (NikB and NikC) and a solute-binding protein (NikA).

It localises to the cell inner membrane. The enzyme catalyses Ni(2+)(out) + ATP + H2O = Ni(2+)(in) + ADP + phosphate + H(+). Its function is as follows. Part of the ABC transporter complex NikABCDE involved in nickel import. Responsible for energy coupling to the transport system. The protein is Nickel import ATP-binding protein NikE of Brucella abortus (strain 2308).